The sequence spans 265 residues: Nitrogenase vanadium-iron protein alpha chain (265 aa).

[8Fe-7S] cluster contacts are provided by C17 and C80. A [7Fe-V-9S-C-homocitryl] cluster-binding site is contributed by C199.

Belongs to the NifD/NifK/NifE/NifN family. In terms of assembly, hexamer of two alpha, two beta, and two delta chains. It depends on [8Fe-7S] cluster as a cofactor. Requires [7Fe-V-9S-C-homocitryl] cluster as cofactor.

The catalysed reaction is N2 + 8 reduced [2Fe-2S]-[ferredoxin] + 16 ATP + 16 H2O = H2 + 8 oxidized [2Fe-2S]-[ferredoxin] + 2 NH4(+) + 16 ADP + 16 phosphate + 6 H(+). This vanadium-iron protein is part of the nitrogenase complex that catalyzes the key enzymatic reactions in nitrogen fixation. In Azorhizophilus paspali (Azotobacter paspali), this protein is Nitrogenase vanadium-iron protein alpha chain (vnfD).